The primary structure comprises 214 residues: MDGVSLADLRLNYTQGGLIEAEVADHPFAQFHIWLQQAIAAELPEPNAMTLSTLSEEGHPVGRMVLLKGLDERGFVFYTNYDSAKGQQLTAHPWAGLVFWWAALERQVRVDGQVEKIDPAESDAYFQSRPRGSQLGAWASPQSRIVGDRQELEDNLARWEKQYENQSIPRPPHWGGFRVIPHRIEFWQGRPSRLHDRLQFNLLDGQWHRQRLAP.

Substrate-binding positions include 10 to 13 (RLNY) and K68. Residues 63–68 (RMVLLK), 78–79 (YT), K85, and Q107 each bind FMN. Residues Y125, R129, and S133 each coordinate substrate. Residues 142 to 143 (QS) and W187 each bind FMN. 193–195 (RLH) is a binding site for substrate. R197 serves as a coordination point for FMN.

Belongs to the pyridoxamine 5'-phosphate oxidase family. Homodimer. FMN is required as a cofactor.

The enzyme catalyses pyridoxamine 5'-phosphate + O2 + H2O = pyridoxal 5'-phosphate + H2O2 + NH4(+). The catalysed reaction is pyridoxine 5'-phosphate + O2 = pyridoxal 5'-phosphate + H2O2. It functions in the pathway cofactor metabolism; pyridoxal 5'-phosphate salvage; pyridoxal 5'-phosphate from pyridoxamine 5'-phosphate: step 1/1. It participates in cofactor metabolism; pyridoxal 5'-phosphate salvage; pyridoxal 5'-phosphate from pyridoxine 5'-phosphate: step 1/1. Catalyzes the oxidation of either pyridoxine 5'-phosphate (PNP) or pyridoxamine 5'-phosphate (PMP) into pyridoxal 5'-phosphate (PLP). The polypeptide is Pyridoxine/pyridoxamine 5'-phosphate oxidase (Synechocystis sp. (strain ATCC 27184 / PCC 6803 / Kazusa)).